We begin with the raw amino-acid sequence, 485 residues long: Probable L-xylulose kinase (485 aa).

The protein belongs to the FGGY kinase family. In terms of assembly, homodimer.

It catalyses the reaction L-xylulose + ATP = L-xylulose 5-phosphate + ADP + H(+). This Haemophilus influenzae (strain ATCC 51907 / DSM 11121 / KW20 / Rd) protein is Probable L-xylulose kinase (lyx).